The chain runs to 371 residues: Histidinol-phosphate aminotransferase (371 aa).

K227 is modified (N6-(pyridoxal phosphate)lysine).

It belongs to the class-II pyridoxal-phosphate-dependent aminotransferase family. Histidinol-phosphate aminotransferase subfamily. In terms of assembly, homodimer. The cofactor is pyridoxal 5'-phosphate.

The catalysed reaction is L-histidinol phosphate + 2-oxoglutarate = 3-(imidazol-4-yl)-2-oxopropyl phosphate + L-glutamate. It participates in amino-acid biosynthesis; L-histidine biosynthesis; L-histidine from 5-phospho-alpha-D-ribose 1-diphosphate: step 7/9. This chain is Histidinol-phosphate aminotransferase, found in Sphingopyxis alaskensis (strain DSM 13593 / LMG 18877 / RB2256) (Sphingomonas alaskensis).